Here is a 423-residue protein sequence, read N- to C-terminus: Dihydroorotase (423 aa).

2 residues coordinate Zn(2+): His60 and His62. Substrate is bound by residues 62 to 64 and Asn94; that span reads HFR. Zn(2+) is bound by residues Asp151, His178, and His231. Substrate is bound at residue Asn277. A Zn(2+)-binding site is contributed by Asp304. The active site involves Asp304. His308 contributes to the substrate binding site.

Belongs to the metallo-dependent hydrolases superfamily. DHOase family. Class I DHOase subfamily. The cofactor is Zn(2+).

It catalyses the reaction (S)-dihydroorotate + H2O = N-carbamoyl-L-aspartate + H(+). It functions in the pathway pyrimidine metabolism; UMP biosynthesis via de novo pathway; (S)-dihydroorotate from bicarbonate: step 3/3. Functionally, catalyzes the reversible cyclization of carbamoyl aspartate to dihydroorotate. This chain is Dihydroorotase, found in Lactococcus lactis subsp. lactis (strain IL1403) (Streptococcus lactis).